A 489-amino-acid chain; its full sequence is Blue-light-activated histidine kinase (489 aa).

Positions 19–93 constitute a PAS domain; the sequence is ATDPFRAAVE…AIKSAIAAEK (75 aa). Residue C69 is modified to S-4a-FMN cysteine. 2 PAC domains span residues 93–147 and 232–281; these read KPID…ELEK and YSIE…NKAL. Positions 259-341 are HWE histidine kinase domain; it reads NPLVLGIVQD…LLKENWAGAT (83 aa). H288 carries the post-translational modification Phosphohistidine; by autocatalysis.

Post-translationally, FMN binds covalently to cysteine after exposure to blue light and this bond is spontaneously broken in the dark.

The enzyme catalyses ATP + protein L-histidine = ADP + protein N-phospho-L-histidine.. Its function is as follows. Photosensitive kinase that is involved in increased bacterial virulence upon exposure to light. Once ejected from an infected animal host, sunlight acts as an environmental signal that increases the virulence of the bacterium, preparing it for infection of the next host. This photoreceptor protein is directly related to the bacterium's survival and replication within host macrophages. In Brucella ovis (strain ATCC 25840 / 63/290 / NCTC 10512), this protein is Blue-light-activated histidine kinase.